The following is a 236-amino-acid chain: Three prime repair exonuclease 2 (236 aa).

Mg(2+) contacts are provided by aspartate 14 and glutamate 16. Substrate contacts are provided by residues 16–17 (EA) and tyrosine 122. Histidine 188 (proton donor/acceptor) is an active-site residue. Aspartate 193 lines the Mg(2+) pocket. Aspartate 193 serves as a coordination point for substrate.

It belongs to the exonuclease superfamily. TREX family. As to quaternary structure, homodimer. The cofactor is Mg(2+). Detected in heart, breast, prostate, skeletal muscle, testis, uterus, bone marrow, colon, small intestine, stomach and thymus.

It is found in the nucleus. The catalysed reaction is Exonucleolytic cleavage in the 3'- to 5'-direction to yield nucleoside 5'-phosphates.. Its function is as follows. Exonuclease with a preference for double-stranded DNA with mismatched 3' termini. May play a role in DNA repair. This Homo sapiens (Human) protein is Three prime repair exonuclease 2 (TREX2).